The chain runs to 278 residues: Large ribosomal subunit protein uL2 (278 aa).

The segment at 224-262 is disordered; sequence VMNPVDHPLGGGEGRTSGGRHPVTPWGKPTKGFKTRKTR.

This sequence belongs to the universal ribosomal protein uL2 family. As to quaternary structure, part of the 50S ribosomal subunit. Forms a bridge to the 30S subunit in the 70S ribosome.

One of the primary rRNA binding proteins. Required for association of the 30S and 50S subunits to form the 70S ribosome, for tRNA binding and peptide bond formation. It has been suggested to have peptidyltransferase activity; this is somewhat controversial. Makes several contacts with the 16S rRNA in the 70S ribosome. This chain is Large ribosomal subunit protein uL2, found in Leptospira biflexa serovar Patoc (strain Patoc 1 / Ames).